The following is a 312-amino-acid chain: Cathepsin O (312 aa).

The N-terminal stretch at 1 to 23 is a signal peptide; the sequence is MKPQLVNLLLLCCCCLGRHGVAG. Residues 24–98 constitute a propeptide, activation peptide; it reads TWSWSHQREA…EGQRPIPNVS (75 aa). Residues N53 and N96 are each glycosylated (N-linked (GlcNAc...) asparagine). Disulfide bonds link C120–C161, C154–C195, and C253–C301. C123 is a catalytic residue. Residues H260 and N280 contribute to the active site.

Belongs to the peptidase C1 family.

It localises to the lysosome. It carries out the reaction The recombinant human enzyme hydrolyzes synthetic endopeptidase substrates including Z-Phe-Arg-NHMec and Z-Arg-Arg-NHMec.. Proteolytic enzyme possibly involved in normal cellular protein degradation and turnover. The chain is Cathepsin O (Ctso) from Mus musculus (Mouse).